The chain runs to 585 residues: Frizzled-5 (585 aa).

An N-terminal signal peptide occupies residues M1–A26. Residues A27–W238 are Extracellular-facing. The FZ domain maps to S28–Y150. 5 cysteine pairs are disulfide-bonded: C33-C94, C41-C87, C78-C116, C105-C147, and C109-C133. An N-linked (GlcNAc...) asparagine glycan is attached at N47. N-linked (GlcNAc...) asparagine glycosylation occurs at N151. Residues T156 to C182 are disordered. The helical transmembrane segment at I239 to I259 threads the bilayer. The Cytoplasmic portion of the chain corresponds to D260–P270. A helical membrane pass occupies residues I271–V291. Residues G292–C315 lie on the Extracellular side of the membrane. A helical transmembrane segment spans residues T316–L336. The Cytoplasmic segment spans residues S337 to Q358. Residues Y359–S379 traverse the membrane as a helical segment. Residues S380 to G402 lie on the Extracellular side of the membrane. The helical transmembrane segment at F403 to F423 threads the bilayer. The Cytoplasmic portion of the chain corresponds to V424–R449. A helical membrane pass occupies residues I450 to Y470. At E471–Y500 the chain is on the extracellular side. Residues W501–I521 traverse the membrane as a helical segment. Residues W522–V585 lie on the Cytoplasmic side of the membrane. Positions L582 to H584 match the PDZ-binding motif.

This sequence belongs to the G-protein coupled receptor Fz/Smo family. As to quaternary structure, binding of unsaturated fatty acid molecules (via FZ domain) promotes homodimerization (via FZ domain). Interacts with WNT2B. Interacts with WNT7A. Interacts with GOPC. Ubiquitinated by RNF43 and ZNRF3, leading to its degradation by the proteasome. As to expression, detected in hippocampus (at protein level). Expressed in eye, kidney, lung, chondrocytes, epithelial cells of the small intestine and gobelet cells of the colon.

It localises to the cell membrane. Its subcellular location is the golgi apparatus membrane. The protein localises to the synapse. It is found in the perikaryon. The protein resides in the cell projection. It localises to the dendrite. Its subcellular location is the axon. Functionally, receptor for Wnt proteins. Functions in the canonical Wnt/beta-catenin signaling pathway. In vitro activates WNT2, WNT10B, WNT5A, but not WNT2B or WNT4 signaling. In neurons, activation by WNT7A promotes formation of synapses. May be involved in transduction and intercellular transmission of polarity information during tissue morphogenesis and/or in differentiated tissues. Plays a role in yolk sac angiogenesis and in placental vascularization. Plays a role in ocular development. This Mus musculus (Mouse) protein is Frizzled-5 (Fzd5).